Consider the following 322-residue polypeptide: Mycothiol acetyltransferase (322 aa).

N-acetyltransferase domains lie at 5 to 150 (SWLR…DPDD) and 160 to 322 (VTIR…PARG). Residue Glu36 coordinates 1D-myo-inositol 2-(L-cysteinylamino)-2-deoxy-alpha-D-glucopyranoside. Residues 79 to 81 (LVV) and 87 to 92 (RRGVGT) contribute to the acetyl-CoA site. The 1D-myo-inositol 2-(L-cysteinylamino)-2-deoxy-alpha-D-glucopyranoside site is built by Glu187, Lys226, and Glu252. Residue 256-258 (VGV) coordinates acetyl-CoA. Tyr290 serves as a coordination point for 1D-myo-inositol 2-(L-cysteinylamino)-2-deoxy-alpha-D-glucopyranoside. 295–300 (NARAVR) is an acetyl-CoA binding site.

Belongs to the acetyltransferase family. MshD subfamily. Monomer.

It catalyses the reaction 1D-myo-inositol 2-(L-cysteinylamino)-2-deoxy-alpha-D-glucopyranoside + acetyl-CoA = mycothiol + CoA + H(+). Functionally, catalyzes the transfer of acetyl from acetyl-CoA to desacetylmycothiol (Cys-GlcN-Ins) to form mycothiol. This chain is Mycothiol acetyltransferase, found in Parafrankia sp. (strain EAN1pec).